The following is a 128-amino-acid chain: MDYINAIGRRKAAVARVYLSEGSGKIVINKREIEQYFPSSILQYIVKQPLLKLDVAAKYDIKINLRGGGFKGQSEAARLAIARALVKINPDDKPALRSEGFITRDPRVVERKKPGRPKARKRFQFSKR.

Positions 106-128 (PRVVERKKPGRPKARKRFQFSKR) are disordered. Residues 113–128 (KPGRPKARKRFQFSKR) are compositionally biased toward basic residues.

Belongs to the universal ribosomal protein uS9 family.

This chain is Small ribosomal subunit protein uS9, found in Porphyromonas gingivalis (strain ATCC 33277 / DSM 20709 / CIP 103683 / JCM 12257 / NCTC 11834 / 2561).